Here is a 212-residue protein sequence, read N- to C-terminus: ATP synthase subunit 5, mitochondrial (212 aa).

A mitochondrion-targeting transit peptide spans 1–17 (MFNRVFTRSFASSLRAA).

It belongs to the ATPase delta chain family. In terms of assembly, F-type ATPases have 2 components, CF(1) - the catalytic core - and CF(0) - the membrane proton channel. CF(1) has five subunits: alpha(3), beta(3), gamma(1), delta(1), epsilon(1). CF(0) has three main subunits: a, b and c.

The protein resides in the mitochondrion. It localises to the mitochondrion inner membrane. In terms of biological role, mitochondrial membrane ATP synthase (F(1)F(0) ATP synthase or Complex V) produces ATP from ADP in the presence of a proton gradient across the membrane which is generated by electron transport complexes of the respiratory chain. F-type ATPases consist of two structural domains, F(1) - containing the extramembraneous catalytic core and F(0) - containing the membrane proton channel, linked together by a central stalk and a peripheral stalk. During catalysis, ATP synthesis in the catalytic domain of F(1) is coupled via a rotary mechanism of the central stalk subunits to proton translocation. Part of the complex F(0) domain and the peripheric stalk, which acts as a stator to hold the catalytic alpha(3)beta(3) subcomplex and subunit a/ATP6 static relative to the rotary elements. This is ATP synthase subunit 5, mitochondrial (ATP5) from Saccharomyces cerevisiae (strain ATCC 204508 / S288c) (Baker's yeast).